We begin with the raw amino-acid sequence, 568 residues long: DEAD-box ATP-dependent RNA helicase 51 (568 aa).

2 stretches are compositionally biased toward basic and acidic residues: residues 1 to 13 (MVES…EELK) and 23 to 47 (KKNE…TQKK). Residues 1-70 (MVESDKSSVE…EEEEKVEAME (70 aa)) form a disordered region. Positions 13–78 (KKRVRKRSRG…MEDGEDEKNI (66 aa)) form a coiled coil. Over residues 60–70 (EEEEEKVEAME) the composition is skewed to acidic residues. A Q motif motif is present at residues 89-117 (VTFDSLDLSEQTSIAIKEMGFQYMTQIQA). The 176-residue stretch at 120 to 295 (IQPLLEGKDV…RVSLTSPVHV (176 aa)) folds into the Helicase ATP-binding domain. 133–140 (ARTGSGKT) serves as a coordination point for ATP. Positions 243–246 (DEAD) match the DEAD box motif. A Helicase C-terminal domain is found at 321 to 468 (RLILLISFLK…ELEFNEKRLS (148 aa)). The tract at residues 540–568 (KVRKARKQQGRNGFSPYSPYGKSTPTKEA) is disordered.

It belongs to the DEAD box helicase family. DDX18/HAS1 subfamily.

The enzyme catalyses ATP + H2O = ADP + phosphate + H(+). In Arabidopsis thaliana (Mouse-ear cress), this protein is DEAD-box ATP-dependent RNA helicase 51 (RH51).